The following is a 356-amino-acid chain: Magnesium-protoporphyrin IX monomethyl ester [oxidative] cyclase (356 aa).

It belongs to the AcsF family. Requires Fe cation as cofactor.

The catalysed reaction is Mg-protoporphyrin IX 13-monomethyl ester + 3 NADPH + 3 O2 + 2 H(+) = 3,8-divinyl protochlorophyllide a + 3 NADP(+) + 5 H2O. It functions in the pathway porphyrin-containing compound metabolism; chlorophyll biosynthesis (light-independent). Functionally, catalyzes the formation of the isocyclic ring in chlorophyll biosynthesis. Mediates the cyclase reaction, which results in the formation of divinylprotochlorophyllide (Pchlide) characteristic of all chlorophylls from magnesium-protoporphyrin IX 13-monomethyl ester (MgPMME). In Parasynechococcus marenigrum (strain WH8102), this protein is Magnesium-protoporphyrin IX monomethyl ester [oxidative] cyclase.